The following is a 177-amino-acid chain: MTEQPTKPTGSRPPRQPRTGLTSTGARKAGSKSDRSRAREFALQALYQSLVGKNTVSDIDAFTRDLAGFSKADSLHFDTLLQGCTEQAAALDALLLPLLDRKFAEISPIEHSIMWIGAFELQHCLDVPWRVVLNECVELAKEFGGTDGHKYVNAVLNSLAPSLRAAEVNADRGKTRA.

A disordered region spans residues 1–36 (MTEQPTKPTGSRPPRQPRTGLTSTGARKAGSKSDRS).

Belongs to the NusB family.

Its function is as follows. Involved in transcription antitermination. Required for transcription of ribosomal RNA (rRNA) genes. Binds specifically to the boxA antiterminator sequence of the ribosomal RNA (rrn) operons. This Albidiferax ferrireducens (strain ATCC BAA-621 / DSM 15236 / T118) (Rhodoferax ferrireducens) protein is Transcription antitermination protein NusB.